The sequence spans 25 residues: VATSEPNRYFNPYSYVELIITVDHS.

Residues 14–25 form the Peptidase M12B domain; sequence SYVELIITVDHS. Glutamate 17 provides a ligand contact to Ca(2+).

It belongs to the venom metalloproteinase (M12B) family. P-III subfamily. P-IIIa sub-subfamily. As to quaternary structure, monomer. The cofactor is Zn(2+). Post-translationally, N-glycosylated. Contains 16 disulfide bonds. In terms of tissue distribution, expressed by the venom gland.

It localises to the secreted. Inhibited by EDTA, EGTA and 1,10-phenanthroline. Addition of Mg(2+) or Ca(2+) increases the casein hydrolysis rate. In terms of biological role, snake venom zinc metalloprotease that possesses high hemorrhagic activity (minimum hemorrhagic dose, MHD=0.86 ug) when subcutaneously injected into mice. Has potent fibrinogenolytic activity on alpha-chain of fibrinogen (FGA). Hydrolyzes model substrate (beta-chain of insulin) at Ala(14)-Leu(15) and Tyr(16)-Leu(17) followed by His(10)-Leu(11) and Phe(24)-Phe(25). This is Zinc metalloproteinase-disintegrin-like daborhagin-M from Daboia siamensis (Eastern Russel's viper).